The following is a 354-amino-acid chain: Carbonic anhydrase 12 (354 aa).

The signal sequence occupies residues 1–24 (MPHRSLRATVVLLLVILKKQPSSS). The Extracellular segment spans residues 25-301 (APLNGSKWTY…QGLLTDTGLS (277 aa)). 4 N-linked (GlcNAc...) asparagine glycosylation sites follow: Asn-28, Asn-42, Asn-80, and Asn-88. The 261-residue stretch at 30–290 (SKWTYVGPAG…FDERLVYISF (261 aa)) folds into the Alpha-carbonic anhydrase domain. A disulfide bridge links Cys-50 with Cys-231. His-94 acts as the Proton donor/acceptor in catalysis. Residues His-120, His-122, and His-146 each contribute to the Zn(2+) site. 227–228 (TT) provides a ligand contact to substrate. Residues 302-322 (LGIILSVALAGVLGISIVLAV) form a helical membrane-spanning segment. The Cytoplasmic portion of the chain corresponds to 323–354 (SIWLFKRKKSKKGDNKGVIYKPAIKKEAEVHA).

This sequence belongs to the alpha-carbonic anhydrase family. In terms of assembly, homodimer. It depends on Zn(2+) as a cofactor.

It is found in the membrane. The protein resides in the cell membrane. It catalyses the reaction hydrogencarbonate + H(+) = CO2 + H2O. Its activity is regulated as follows. Inhibited by acetazolamide. Its function is as follows. Reversible hydration of carbon dioxide. The protein is Carbonic anhydrase 12 of Mus musculus (Mouse).